The following is a 274-amino-acid chain: uncharacterized protein (274 aa).

A disordered region spans residues 235-274 (ETFDTQQDPKKTPETDKNAAYKGKEKKGKKEERGPRSIMK). Positions 241–274 (QDPKKTPETDKNAAYKGKEKKGKKEERGPRSIMK) are enriched in basic and acidic residues.

This is an uncharacterized protein from Treponema pallidum (strain Nichols).